Here is a 71-residue protein sequence, read N- to C-terminus: MYIIFRCDCGRALYSREGAKTRKCVCGRTVNVKDRRIFGRADDFEEASELVRKLQEEKYGSCHFTNPSKRE.

In Methanothermobacter thermautotrophicus (strain ATCC 29096 / DSM 1053 / JCM 10044 / NBRC 100330 / Delta H) (Methanobacterium thermoautotrophicum), this protein is Protein MTH_1184.